The sequence spans 360 residues: DNA polymerase IV (360 aa).

The region spanning 6–187 (IIHVDMDAFY…LKIGDLHGVG (182 aa)) is the UmuC domain. Mg(2+)-binding residues include D10 and D105. E106 is a catalytic residue.

The protein belongs to the DNA polymerase type-Y family. In terms of assembly, monomer. The cofactor is Mg(2+).

The protein localises to the cytoplasm. It catalyses the reaction DNA(n) + a 2'-deoxyribonucleoside 5'-triphosphate = DNA(n+1) + diphosphate. Its function is as follows. Poorly processive, error-prone DNA polymerase involved in untargeted mutagenesis. Copies undamaged DNA at stalled replication forks, which arise in vivo from mismatched or misaligned primer ends. These misaligned primers can be extended by PolIV. Exhibits no 3'-5' exonuclease (proofreading) activity. May be involved in translesional synthesis, in conjunction with the beta clamp from PolIII. This is DNA polymerase IV from Exiguobacterium sibiricum (strain DSM 17290 / CCUG 55495 / CIP 109462 / JCM 13490 / 255-15).